The chain runs to 125 residues: Large ribosomal subunit protein bL12 (125 aa).

It belongs to the bacterial ribosomal protein bL12 family. Homodimer. Part of the ribosomal stalk of the 50S ribosomal subunit. Forms a multimeric L10(L12)X complex, where L10 forms an elongated spine to which 2 to 4 L12 dimers bind in a sequential fashion. Binds GTP-bound translation factors.

Its function is as follows. Forms part of the ribosomal stalk which helps the ribosome interact with GTP-bound translation factors. Is thus essential for accurate translation. This is Large ribosomal subunit protein bL12 from Helicobacter pylori (strain P12).